The primary structure comprises 1388 residues: Kinesin-like protein KIF15-A (1388 aa).

The region spanning 26 to 364 is the Kinesin motor domain; sequence AIKVFVRIRP…LQFAQRAKLI (339 aa). 110 to 117 contributes to the ATP binding site; it reads GQTGSGKT. The stretch at 369–1383 forms a coiled coil; it reads VVNEDTQGNV…ENLFLKESKK (1015 aa). Residues 1127–1156 are disordered; sequence EQEKIRPASSNSSSPVVLPETPRTPEGNPY. The interval 1139–1388 is necessary for its targeting to microtubule minus ends; that stretch reads SSPVVLPETP…KESKKCEHCN (250 aa).

This sequence belongs to the TRAFAC class myosin-kinesin ATPase superfamily. Kinesin family. KLP2 subfamily. Homodimer. Dimerization is required for targeting to microtubule minus ends. Found in a complex with tpx2 and microtubules. Its association with microtubules and targeting to microtubule minus ends requires tpx2. Strongly expressed in testis and weakly in lung (at protein level).

It is found in the cytoplasm. The protein localises to the cytoskeleton. Its subcellular location is the microtubule organizing center. The protein resides in the centrosome. It localises to the spindle. It is found in the spindle pole. Plus-end directed kinesin-like motor enzyme involved in mitotic spindle assembly. Required for centrosome separation and maintenance of spindle bipolarity during mitosis. The sequence is that of Kinesin-like protein KIF15-A (kif15-a) from Xenopus laevis (African clawed frog).